Reading from the N-terminus, the 292-residue chain is Putative peptidyl-prolyl cis-trans isomerase NifM (292 aa).

One can recognise a PpiC domain in the interval histidine 148–serine 243.

This sequence belongs to the PpiC/parvulin rotamase family.

It carries out the reaction [protein]-peptidylproline (omega=180) = [protein]-peptidylproline (omega=0). Functionally, required for the activation and stabilization of the iron-component (NifH) of nitrogenase. Probable PPIase. This Azotobacter vinelandii protein is Putative peptidyl-prolyl cis-trans isomerase NifM (nifM).